A 344-amino-acid chain; its full sequence is Inositol 2-dehydrogenase/D-chiro-inositol 3-dehydrogenase (344 aa).

This sequence belongs to the Gfo/Idh/MocA family. Homotetramer.

It catalyses the reaction myo-inositol + NAD(+) = scyllo-inosose + NADH + H(+). The enzyme catalyses 1D-chiro-inositol + NAD(+) = scyllo-inosine + NADH + H(+). It functions in the pathway polyol metabolism; myo-inositol degradation into acetyl-CoA; acetyl-CoA from myo-inositol: step 1/7. Involved in the oxidation of myo-inositol (MI) and D-chiro-inositol (DCI) to 2-keto-myo-inositol (2KMI or 2-inosose) and 1-keto-D-chiro-inositol (1KDCI), respectively. This chain is Inositol 2-dehydrogenase/D-chiro-inositol 3-dehydrogenase, found in Bacillus licheniformis (strain ATCC 14580 / DSM 13 / JCM 2505 / CCUG 7422 / NBRC 12200 / NCIMB 9375 / NCTC 10341 / NRRL NRS-1264 / Gibson 46).